A 147-amino-acid chain; its full sequence is Large ribosomal subunit protein uL15 (147 aa).

Over residues 1 to 15 (MKLHELKPAKGAVKE) the composition is skewed to basic and acidic residues. The disordered stretch occupies residues 1 to 47 (MKLHELKPAKGAVKEVKRKGRGRATGNGKTAGRGHNGQNSRSGGGVR). A compositionally biased stretch (gly residues) spans 23–35 (RATGNGKTAGRGH).

This sequence belongs to the universal ribosomal protein uL15 family. Part of the 50S ribosomal subunit.

Binds to the 23S rRNA. The protein is Large ribosomal subunit protein uL15 of Alkaliphilus metalliredigens (strain QYMF).